The sequence spans 394 residues: Elongation factor Tu (394 aa).

A tr-type G domain is found at 10 to 204 (KPHLNVGTIG…TLDTYIEDPV (195 aa)). The interval 19 to 26 (GHVDHGKT) is G1. Position 19–26 (19–26 (GHVDHGKT)) interacts with GTP. Position 26 (Thr-26) interacts with Mg(2+). The segment at 60–64 (GITIK) is G2. Positions 81-84 (DCPG) are G3. GTP-binding positions include 81 to 85 (DCPGH) and 136 to 139 (NKCD). The G4 stretch occupies residues 136-139 (NKCD). The tract at residues 174–176 (SAL) is G5.

This sequence belongs to the TRAFAC class translation factor GTPase superfamily. Classic translation factor GTPase family. EF-Tu/EF-1A subfamily. Monomer.

Its subcellular location is the cytoplasm. It carries out the reaction GTP + H2O = GDP + phosphate + H(+). Functionally, GTP hydrolase that promotes the GTP-dependent binding of aminoacyl-tRNA to the A-site of ribosomes during protein biosynthesis. This Onion yellows phytoplasma (strain OY-M) protein is Elongation factor Tu.